Consider the following 710-residue polypeptide: Tubulin polyglutamylase TTLL11 (710 aa).

The segment at 41 to 135 (VRVDAGAAGE…QRPVTVDSSK (95 aa)) is disordered. Basic and acidic residues predominate over residues 51 to 60 (PECKAGEEQP). A compositionally biased stretch (low complexity) spans 64 to 82 (APAPAQPSAAEEGNTQVLQ). Positions 83-93 (RPPPTLPPSKP) are enriched in pro residues. Polar residues predominate over residues 123–135 (NGSQRPVTVDSSK). The TTL domain maps to 128-480 (PVTVDSSKAR…EVKVAVIRDT (353 aa)). ATP is bound by residues Lys249, 255–256 (QG), 282–285 (QEYI), and 295–297 (KFD). Residue Gln255 coordinates a protein. Arg321 serves as a coordination point for L-glutamate. Residue 343 to 344 (TN) coordinates ATP. L-glutamate-binding residues include Tyr345, Ser346, and Lys365. 3 residues coordinate Mg(2+): Asp428, Glu441, and Asn443. The tract at residues 467–538 (LVDEEVKVAV…SICLKQVFPK (72 aa)) is c-MTBD region. Lys473 lines the L-glutamate pocket. Residues 665–710 (GVPSGGRPPHRGPPQEPSPSAQPAGDNPPPRTSCANKLSHPRHTLS) are disordered.

Belongs to the tubulin--tyrosine ligase family. It depends on Mg(2+) as a cofactor.

The protein localises to the cytoplasm. It localises to the cytoskeleton. Its subcellular location is the cilium basal body. The catalysed reaction is L-glutamyl-[protein] + L-glutamate + ATP = gamma-L-glutamyl-L-glutamyl-[protein] + ADP + phosphate + H(+). It catalyses the reaction (L-glutamyl)(n)-gamma-L-glutamyl-L-glutamyl-[protein] + L-glutamate + ATP = (L-glutamyl)(n+1)-gamma-L-glutamyl-L-glutamyl-[protein] + ADP + phosphate + H(+). In terms of biological role, polyglutamylase which modifies tubulin, generating polyglutamate side chains of variable lengths on the gamma-carboxyl group of specific glutamate residues within the C-terminal tail of tubulin. Preferentially mediates ATP-dependent polyglutamate long side-chain elongation over the initiation step of the polyglutamylation reaction. Preferentially modifies the alpha-tubulin tail over a beta-tail. Required for CCSAP localization to both spindle and cilia microtubules. Promotes tubulin polyglutamylation which stimulates spastin/SPAST-mediated microtubule severing, thereby regulating microtubule functions. The sequence is that of Tubulin polyglutamylase TTLL11 from Homo sapiens (Human).